The primary structure comprises 313 residues: Protein MFI (313 aa).

Can homodimerize. Interacts with MFF; the interaction inhibits MFF interaction with DNM1L. As to expression, enriched in the pancreatic beta cell and the testis and is expressed at low levels in other tissues tested.

The protein resides in the cytoplasm. The protein localises to the cytosol. It localises to the mitochondrion outer membrane. In terms of biological role, acts as an inhibitor of mitochondrial fission. Interacts with MFF and prevents DNM1L recruitment to mitochondria, promoting a more fused mitochondrial network. The polypeptide is Protein MFI (Homo sapiens (Human)).